We begin with the raw amino-acid sequence, 190 residues long: Peptidyl-tRNA hydrolase (190 aa).

Position 14 (tyrosine 14) interacts with tRNA. Residue histidine 19 is the Proton acceptor of the active site. Positions 64, 66, and 112 each coordinate tRNA.

Belongs to the PTH family. Monomer.

It localises to the cytoplasm. The catalysed reaction is an N-acyl-L-alpha-aminoacyl-tRNA + H2O = an N-acyl-L-amino acid + a tRNA + H(+). In terms of biological role, hydrolyzes ribosome-free peptidyl-tRNAs (with 1 or more amino acids incorporated), which drop off the ribosome during protein synthesis, or as a result of ribosome stalling. Functionally, catalyzes the release of premature peptidyl moieties from peptidyl-tRNA molecules trapped in stalled 50S ribosomal subunits, and thus maintains levels of free tRNAs and 50S ribosomes. The sequence is that of Peptidyl-tRNA hydrolase from Chlorobaculum parvum (strain DSM 263 / NCIMB 8327) (Chlorobium vibrioforme subsp. thiosulfatophilum).